The following is a 106-amino-acid chain: ATP-dependent Clp protease adapter protein ClpS (106 aa).

It belongs to the ClpS family. Binds to the N-terminal domain of the chaperone ClpA.

In terms of biological role, involved in the modulation of the specificity of the ClpAP-mediated ATP-dependent protein degradation. In Yersinia enterocolitica serotype O:8 / biotype 1B (strain NCTC 13174 / 8081), this protein is ATP-dependent Clp protease adapter protein ClpS.